Here is a 329-residue protein sequence, read N- to C-terminus: Palmitoyltransferase pfa3 (329 aa).

The next 5 helical transmembrane spans lie at valine 14–valine 34, valine 49–leucine 69, phenylalanine 141–phenylalanine 161, alanine 177–methionine 197, and isoleucine 243–valine 263. One can recognise a DHHC domain in the interval arginine 97–phenylalanine 147.

The protein belongs to the DHHC palmitoyltransferase family. PFA3 subfamily. Autopalmitoylated.

It localises to the vacuole membrane. It is found in the golgi apparatus membrane. It carries out the reaction L-cysteinyl-[protein] + hexadecanoyl-CoA = S-hexadecanoyl-L-cysteinyl-[protein] + CoA. In terms of biological role, palmitoyltransferase specific for VAC8. Palmitoylates VAC8 at one or more of its N-terminal cysteine residues, which is required for its proper membrane localization. The sequence is that of Palmitoyltransferase pfa3 (pfa3) from Schizosaccharomyces pombe (strain 972 / ATCC 24843) (Fission yeast).